The sequence spans 166 residues: ATP synthase subunit b (166 aa).

Residues 8–28 (FSFGLFFWQALILVILILLLV) traverse the membrane as a helical segment.

It belongs to the ATPase B chain family. In terms of assembly, F-type ATPases have 2 components, F(1) - the catalytic core - and F(0) - the membrane proton channel. F(1) has five subunits: alpha(3), beta(3), gamma(1), delta(1), epsilon(1). F(0) has three main subunits: a(1), b(2) and c(10-14). The alpha and beta chains form an alternating ring which encloses part of the gamma chain. F(1) is attached to F(0) by a central stalk formed by the gamma and epsilon chains, while a peripheral stalk is formed by the delta and b chains.

The protein resides in the cell inner membrane. In terms of biological role, f(1)F(0) ATP synthase produces ATP from ADP in the presence of a proton or sodium gradient. F-type ATPases consist of two structural domains, F(1) containing the extramembraneous catalytic core and F(0) containing the membrane proton channel, linked together by a central stalk and a peripheral stalk. During catalysis, ATP synthesis in the catalytic domain of F(1) is coupled via a rotary mechanism of the central stalk subunits to proton translocation. Functionally, component of the F(0) channel, it forms part of the peripheral stalk, linking F(1) to F(0). This chain is ATP synthase subunit b, found in Flavobacterium johnsoniae (strain ATCC 17061 / DSM 2064 / JCM 8514 / BCRC 14874 / CCUG 350202 / NBRC 14942 / NCIMB 11054 / UW101) (Cytophaga johnsonae).